A 374-amino-acid chain; its full sequence is Beta sliding clamp (374 aa).

It belongs to the beta sliding clamp family. As to quaternary structure, forms a ring-shaped head-to-tail homodimer around DNA which binds and tethers DNA polymerases and other proteins to the DNA. The DNA replisome complex has a single clamp-loading complex (3 tau and 1 each of delta, delta', psi and chi subunits) which binds 3 Pol III cores (1 core on the leading strand and 2 on the lagging strand) each with a beta sliding clamp dimer. Additional proteins in the replisome are other copies of gamma, psi and chi, Ssb, DNA helicase and RNA primase.

It is found in the cytoplasm. In terms of biological role, confers DNA tethering and processivity to DNA polymerases and other proteins. Acts as a clamp, forming a ring around DNA (a reaction catalyzed by the clamp-loading complex) which diffuses in an ATP-independent manner freely and bidirectionally along dsDNA. Initially characterized for its ability to contact the catalytic subunit of DNA polymerase III (Pol III), a complex, multichain enzyme responsible for most of the replicative synthesis in bacteria; Pol III exhibits 3'-5' exonuclease proofreading activity. The beta chain is required for initiation of replication as well as for processivity of DNA replication. The chain is Beta sliding clamp (dnaN) from Helicobacter pylori (strain ATCC 700392 / 26695) (Campylobacter pylori).